The following is a 549-amino-acid chain: Glucose-6-phosphate isomerase (549 aa).

Glutamate 355 (proton donor) is an active-site residue. Catalysis depends on residues histidine 386 and lysine 514.

This sequence belongs to the GPI family.

The protein resides in the cytoplasm. It carries out the reaction alpha-D-glucose 6-phosphate = beta-D-fructose 6-phosphate. It participates in carbohydrate biosynthesis; gluconeogenesis. The protein operates within carbohydrate degradation; glycolysis; D-glyceraldehyde 3-phosphate and glycerone phosphate from D-glucose: step 2/4. Functionally, catalyzes the reversible isomerization of glucose-6-phosphate to fructose-6-phosphate. The protein is Glucose-6-phosphate isomerase of Pectobacterium carotovorum subsp. carotovorum (strain PC1).